The primary structure comprises 203 residues: NAD(P)H dehydrogenase (quinone) (203 aa).

Positions 3–194 (VLIVYYSLYG…DAARFQGRHI (192 aa)) constitute a Flavodoxin-like domain. FMN is bound by residues 9-14 (SLYGHV) and 82-84 (TRF). Tyrosine 11 is a binding site for NAD(+). Tryptophan 102 provides a ligand contact to substrate. FMN-binding positions include 117–123 (STATQHG) and histidine 138.

The protein belongs to the WrbA family. FMN is required as a cofactor.

It catalyses the reaction a quinone + NADH + H(+) = a quinol + NAD(+). The catalysed reaction is a quinone + NADPH + H(+) = a quinol + NADP(+). The sequence is that of NAD(P)H dehydrogenase (quinone) from Solidesulfovibrio magneticus (strain ATCC 700980 / DSM 13731 / RS-1) (Desulfovibrio magneticus).